The following is a 258-amino-acid chain: tRNA pseudouridine synthase A (258 aa).

Asp52 serves as the catalytic Nucleophile. Tyr110 serves as a coordination point for substrate.

It belongs to the tRNA pseudouridine synthase TruA family. In terms of assembly, homodimer.

The catalysed reaction is uridine(38/39/40) in tRNA = pseudouridine(38/39/40) in tRNA. Functionally, formation of pseudouridine at positions 38, 39 and 40 in the anticodon stem and loop of transfer RNAs. The polypeptide is tRNA pseudouridine synthase A (Francisella tularensis subsp. mediasiatica (strain FSC147)).